The chain runs to 327 residues: Zinc finger protein 444 (327 aa).

Methionine 1 bears the N-acetylmethionine mark. Lysine 8 participates in a covalent cross-link: Glycyl lysine isopeptide (Lys-Gly) (interchain with G-Cter in SUMO2). Serine 18 and serine 104 each carry phosphoserine. The 85-residue stretch at 20–104 folds into the SCAN box domain; that stretch reads WHRFRRFHLG…LEELWGPAAS (85 aa). The tract at residues 101–171 is disordered; the sequence is PAASPDGSSA…SPPLAPGLPA (71 aa). Over residues 106-118 the composition is skewed to polar residues; sequence DGSSATRVPQDVT. Residues 134 to 148 show a composition bias toward low complexity; sequence PLAGTAPGAEGPAPG. C2H2-type zinc fingers lie at residues 179-201 and 207-229; these read TSCPECGKTSLKPAHLLRHRQSH and HACPECGKAFRRKEHLRRHRDTH. Lysine 190 participates in a covalent cross-link: Glycyl lysine isopeptide (Lys-Gly) (interchain with G-Cter in SUMO2). Residues 220 to 243 form a disordered region; that stretch reads EHLRRHRDTHPGSPGSPGPALRPL. At serine 235 the chain carries Phosphoserine. 2 C2H2-type zinc fingers span residues 250–272 and 278–300; these read HACCECGKTFYWREHLVRHRKTH and FACWECGKGFGRREHVLRHQRIH. A compositionally biased stretch (low complexity) spans 305 to 314; it reads ASAQGAVAPG. The tract at residues 305–327 is disordered; it reads ASAQGAVAPGPDGGGPFPPWPLG.

Belongs to the krueppel C2H2-type zinc-finger protein family.

The protein resides in the nucleus. Its function is as follows. Transcriptional regulator. Binds to the 5'-flanking critical region of the SCARF1 promoter. The chain is Zinc finger protein 444 (ZNF444) from Homo sapiens (Human).